Consider the following 182-residue polypeptide: Adenylate kinase (182 aa).

Residue 12–17 coordinates ATP; sequence GAGKGT. Positions 32–61 are NMP; that stretch reads STGDLLRAEVGAKTPLGQEAAAVMNRGELV. AMP is bound by residues Thr33, Arg38, 59–61, 85–88, and Gln92; these read ELV and GFPR. Residues 126–132 are LID; sequence SRGRSDD. Residue Arg127 coordinates ATP. Positions 129 and 140 each coordinate AMP. Residue Gly168 participates in ATP binding.

This sequence belongs to the adenylate kinase family. In terms of assembly, monomer.

Its subcellular location is the cytoplasm. The enzyme catalyses AMP + ATP = 2 ADP. Its pathway is purine metabolism; AMP biosynthesis via salvage pathway; AMP from ADP: step 1/1. Its function is as follows. Catalyzes the reversible transfer of the terminal phosphate group between ATP and AMP. Plays an important role in cellular energy homeostasis and in adenine nucleotide metabolism. This is Adenylate kinase from Prochlorococcus marinus (strain MIT 9303).